A 61-amino-acid polypeptide reads, in one-letter code: Conotoxin TxMRCL-04 (61 aa).

Residues 1–22 form the signal peptide; sequence MRCLPVFVILLLLIASTPSVDA. The propeptide occupies 23–46; it reads QLKTKDDMSLASFHDNVKRILQIR.

It belongs to the conotoxin T superfamily. Contains 2 disulfide bonds that can be either 'C1-C3, C2-C4' or 'C1-C4, C2-C3', since these disulfide connectivities have been observed for conotoxins with cysteine framework V (for examples, see AC P0DQQ7 and AC P81755). Expressed by the venom duct.

Its subcellular location is the secreted. This Conus textile (Cloth-of-gold cone) protein is Conotoxin TxMRCL-04.